The primary structure comprises 255 residues: 4-hydroxy-tetrahydrodipicolinate reductase (255 aa).

Residues 13–18, 90–92, and 114–117 each bind NAD(+); these read GCNGKM, CTT, and SANM. The active-site Proton donor/acceptor is H147. H148 contributes to the (S)-2,3,4,5-tetrahydrodipicolinate binding site. K151 acts as the Proton donor in catalysis. Residue 157 to 158 participates in (S)-2,3,4,5-tetrahydrodipicolinate binding; that stretch reads GT.

It belongs to the DapB family.

It localises to the cytoplasm. It catalyses the reaction (S)-2,3,4,5-tetrahydrodipicolinate + NAD(+) + H2O = (2S,4S)-4-hydroxy-2,3,4,5-tetrahydrodipicolinate + NADH + H(+). The catalysed reaction is (S)-2,3,4,5-tetrahydrodipicolinate + NADP(+) + H2O = (2S,4S)-4-hydroxy-2,3,4,5-tetrahydrodipicolinate + NADPH + H(+). The protein operates within amino-acid biosynthesis; L-lysine biosynthesis via DAP pathway; (S)-tetrahydrodipicolinate from L-aspartate: step 4/4. Functionally, catalyzes the conversion of 4-hydroxy-tetrahydrodipicolinate (HTPA) to tetrahydrodipicolinate. In Clostridium tetani (strain Massachusetts / E88), this protein is 4-hydroxy-tetrahydrodipicolinate reductase.